A 551-amino-acid polypeptide reads, in one-letter code: RCC1 and BTB domain-containing protein 2 (551 aa).

6 RCC1 repeats span residues 64–115 (NDEI…VLAT), 117–169 (EGEV…VLTS), 171–222 (GEVF…AVVD), 223–274 (TGEV…VLTD), 276–326 (GQVY…AAKT), and 328–382 (GGHV…TVAE). The 64-residue stretch at 394-457 (ADLKFLVDGK…LYTDSISLSP (64 aa)) folds into the BTB domain.

The protein resides in the cytoplasmic vesicle. Its subcellular location is the secretory vesicle. The protein localises to the acrosome. The protein is RCC1 and BTB domain-containing protein 2 (RCBTB2) of Homo sapiens (Human).